The following is a 441-amino-acid chain: Trigger factor (441 aa).

The region spanning 161–246 is the PPIase FKBP-type domain; that stretch reads GDKVTIDFLG…VHEVLGEKLP (86 aa).

It belongs to the FKBP-type PPIase family. Tig subfamily.

The protein localises to the cytoplasm. The catalysed reaction is [protein]-peptidylproline (omega=180) = [protein]-peptidylproline (omega=0). Functionally, involved in protein export. Acts as a chaperone by maintaining the newly synthesized protein in an open conformation. Functions as a peptidyl-prolyl cis-trans isomerase. This chain is Trigger factor, found in Teredinibacter turnerae (strain ATCC 39867 / T7901).